Reading from the N-terminus, the 167-residue chain is Leptin (167 aa).

A signal peptide spans 1–21 (MHWGTLCGFLWLWPYLFYVQA). Residues C117 and C167 are joined by a disulfide bond.

Belongs to the leptin family. In terms of assembly, interacts with SIGLEC6. Adipose tissue is the main source of leptin. It is also produced by other peripheral tissues such as the skeletal muscle. Expressed by intercalated and striated tracts of submandibular and parotid salivary gland intralobular ducts. Detected by fundic epithelium of the gastric mucosa. Secreted into blood and gastric juice.

It localises to the secreted. Its function is as follows. Key player in the regulation of energy balance and body weight control. Once released into the circulation, has central and peripheral effects by binding LEPR, found in many tissues, which results in the activation of several major signaling pathways. In the hypothalamus, acts as an appetite-regulating factor that induces a decrease in food intake and an increase in energy consumption by inducing anorexinogenic factors and suppressing orexigenic neuropeptides, also regulates bone mass and secretion of hypothalamo-pituitary-adrenal hormones. In the periphery, increases basal metabolism, influences reproductive function, regulates pancreatic beta-cell function and insulin secretion, is pro-angiogenic for endothelial cell and affects innate and adaptive immunity. In the arcuate nucleus of the hypothalamus, activates by depolarization POMC neurons inducing FOS and SOCS3 expression to release anorexigenic peptides and inhibits by hyperpolarization NPY neurons inducing SOCS3 with a consequent reduction on release of orexigenic peptides. In addition to its known satiety inducing effect, has a modulatory role in nutrient absorption. In the intestine, reduces glucose absorption by enterocytes by activating PKC and leading to a sequential activation of p38, PI3K and ERK signaling pathways which exerts an inhibitory effect on glucose absorption. Acts as a growth factor on certain tissues, through the activation of different signaling pathways increases expression of genes involved in cell cycle regulation such as CCND1, via JAK2-STAT3 pathway, or VEGFA, via MAPK1/3 and PI3K-AKT1 pathways. May also play an apoptotic role via JAK2-STAT3 pathway and up-regulation of BIRC5 expression. Pro-angiogenic, has mitogenic activity on vascular endothelial cells and plays a role in matrix remodeling by regulating the expression of matrix metalloproteinases (MMPs) and tissue inhibitors of metalloproteinases (TIMPs). In innate immunity, modulates the activity and function of neutrophils by increasing chemotaxis and the secretion of oxygen radicals. Increases phagocytosis by macrophages and enhances secretion of pro-inflammatory mediators. Increases cytotoxic ability of NK cells. Plays a pro-inflammatory role, in synergy with IL1B, by inducing NOS2 which promotes the production of IL6, IL8 and Prostaglandin E2, through a signaling pathway that involves JAK2, PI3K, MAP2K1/MEK1 and MAPK14/p38. In adaptive immunity, promotes the switch of memory T-cells towards T helper-1 cell immune responses. Increases CD4(+)CD25(-) T-cell proliferation and reduces autophagy during TCR (T-cell receptor) stimulation, through MTOR signaling pathway activation and BCL2 up-regulation. This Homo sapiens (Human) protein is Leptin.